Reading from the N-terminus, the 577-residue chain is Steryl-sulfatase (577 aa).

A signal peptide spans 1–19; sequence MLWPCLLALLLSQLNFLCA. Residues 21–183 lie on the Lumenal side of the membrane; that stretch reads RPGPGPNFLL…GTVFGSAQQV (163 aa). Ca(2+) is bound by residues D34 and D35. N46 is a glycosylation site (N-linked (GlcNAc...) asparagine). C74 serves as a coordination point for Ca(2+). C74 (nucleophile) is an active-site residue. At C74 the chain carries 3-oxoalanine (Cys). The active site involves H135. 2 disulfides stabilise this stretch: C140–C147 and C169–C241. Residues 184 to 207 traverse the membrane as a helical segment; sequence FVVLPMNILGAVLLAMALARWAGL. Topologically, residues 208 to 211 are cytoplasmic; sequence ARPP. The helical transmembrane segment at 212-233 threads the bilayer; the sequence is GWVFGVTVAAMAAVGGAYVAFL. Over 234 to 577 the chain is Lumenal; sequence YHFRPANCFL…PLACRCAGDG (344 aa). N332 carries an N-linked (GlcNAc...) asparagine glycan. Ca(2+) contacts are provided by D341 and H342. 3 disulfides stabilise this stretch: C445–C488, C480–C486, and C561–C571. The N-linked (GlcNAc...) asparagine glycan is linked to N458.

The protein belongs to the sulfatase family. As to quaternary structure, homodimer. Ca(2+) serves as cofactor. In terms of processing, the conversion to 3-oxoalanine (also known as C-formylglycine, FGly), of a serine or cysteine residue in prokaryotes and of a cysteine residue in eukaryotes, is critical for catalytic activity.

The protein localises to the microsome membrane. It localises to the endoplasmic reticulum membrane. The catalysed reaction is dehydroepiandrosterone 3-sulfate + H2O = 3beta-hydroxyandrost-5-en-17-one + sulfate + H(+). The enzyme catalyses estrone 3-sulfate + H2O = estrone + sulfate + H(+). Its function is as follows. Catalyzes the conversion of sulfated steroid precursors, such as dehydroepiandrosterone sulfate (DHEA-S) and estrone sulfate to the free steroid. The sequence is that of Steryl-sulfatase (Sts) from Rattus norvegicus (Rat).